The primary structure comprises 395 residues: Acid ceramidase (395 aa).

The signal sequence occupies residues 1-21 (MLGRSRLALVLLAAAVSCAVA). Cysteines 31 and 340 form a disulfide. Cysteine 143 acts as the Nucleophile in catalysis. Asparagine 173, asparagine 195, asparagine 259, asparagine 286, asparagine 342, and asparagine 348 each carry an N-linked (GlcNAc...) asparagine glycan. Cysteines 388 and 392 form a disulfide.

Belongs to the acid ceramidase family. Heterodimer; disulfide-linked. The heterodimer is composed of the disulfide-linked alpha and beta chains produced by autocatalytic cleavage of the precursor. In terms of processing, N-glycosylated. Proteolytically cleaved into two chains alpha and beta that remain associated via a disulfide bond. Cleavage gives rise to a conformation change that activates the enzyme. The same catalytic Cys residue mediates the autoproteolytic cleavage and subsequent hydrolysis of lipid substrates. The beta chain may undergo an additional C-terminal processing.

The protein localises to the lysosome. It localises to the secreted. It catalyses the reaction an N-acylsphing-4-enine + H2O = sphing-4-enine + a fatty acid. It carries out the reaction N-dodecanoylsphing-4-enine + H2O = dodecanoate + sphing-4-enine. The catalysed reaction is N-tetradecanoylsphing-4-enine + H2O = tetradecanoate + sphing-4-enine. The enzyme catalyses N-hexadecanoylsphing-4-enine + H2O = sphing-4-enine + hexadecanoate. It catalyses the reaction N-octadecanoylsphing-4-enine + H2O = sphing-4-enine + octadecanoate. It carries out the reaction N-dodecanoyl-(4R)-hydroxysphinganine + H2O = (4R)-hydroxysphinganine + dodecanoate. The catalysed reaction is N-(dodecanoyl)-sphinganine + H2O = dodecanoate + sphinganine. The enzyme catalyses N-(acetyl)-sphing-4-enine + H2O = sphing-4-enine + acetate. It catalyses the reaction N-(hexanoyl)sphing-4-enine + H2O = hexanoate + sphing-4-enine. It carries out the reaction N-octanoylsphing-4-enine + H2O = octanoate + sphing-4-enine. The catalysed reaction is N-(9Z-octadecenoyl)-sphing-4-enine + H2O = sphing-4-enine + (9Z)-octadecenoate. The enzyme catalyses N-dodecanoylethanolamine + H2O = dodecanoate + ethanolamine. Its pathway is lipid metabolism; sphingolipid metabolism. In terms of biological role, lysosomal ceramidase that hydrolyzes sphingolipid ceramides into sphingosine and free fatty acids at acidic pH. Ceramides, sphingosine, and its phosphorylated form sphingosine-1-phosphate are bioactive lipids that mediate cellular signaling pathways regulating several biological processes including cell proliferation, apoptosis and differentiation. Has a higher catalytic efficiency towards C12-ceramides versus other ceramides. Also catalyzes the reverse reaction allowing the synthesis of ceramides from fatty acids and sphingosine. For the reverse synthetic reaction, the natural sphingosine D-erythro isomer is more efficiently utilized as a substrate compared to D-erythro-dihydrosphingosine and D-erythro-phytosphingosine, while the fatty acids with chain lengths of 12 or 14 carbons are the most efficiently used. Also has an N-acylethanolamine hydrolase activity. By regulating the levels of ceramides, sphingosine and sphingosine-1-phosphate in the epidermis, mediates the calcium-induced differentiation of epidermal keratinocytes. Also indirectly regulates tumor necrosis factor/TNF-induced apoptosis. By regulating the intracellular balance between ceramides and sphingosine, in adrenocortical cells, probably also acts as a regulator of steroidogenesis. This chain is Acid ceramidase, found in Macaca fascicularis (Crab-eating macaque).